The chain runs to 410 residues: Hemocyanin, beta-C chain unit D (410 aa).

The Cu cation site is built by H44 and H55. C50 and C59 form a disulfide bridge. Residues 60 to 62 (CVH) constitute a cross-link (2'-(S-cysteinyl)-histidine (Cys-His)). 4 residues coordinate Cu cation: H71, H175, H179, and H206. Residues C165 and C232 are joined by a disulfide bond. N-linked (GlcNAc...) asparagine glycosylation is present at N253. A disulfide bond links C321 and C332.

Belongs to the tyrosinase family. Hemocyanin subfamily. In terms of assembly, decamers of large identical subunits (450 kDa), each containing 8 globular oxygen-binding functional units. Requires Cu(2+) as cofactor.

In terms of biological role, hemocyanins are copper-containing oxygen carriers occurring freely dissolved in the hemolymph of many mollusks and arthropods. The sequence is that of Hemocyanin, beta-C chain unit D from Helix pomatia (Roman snail).